We begin with the raw amino-acid sequence, 635 residues long: Dual specificity protein kinase zak2 (635 aa).

Protein kinase domains follow at residues 9–249 and 299–585; these read WEEI…HRLI and NKDD…QIYF. ATP is bound by residues 15-23 and Lys45; that span reads IGSCNSKSR. Asp124 acts as the Proton acceptor in catalysis. ATP contacts are provided by residues 305–313 and Lys326; that span reads GGDGFFSVV. Asp427 (proton acceptor) is an active-site residue.

It in the N-terminal section; belongs to the protein kinase superfamily. Ser/Thr protein kinase family. In the C-terminal section; belongs to the protein kinase superfamily. TKL Tyr protein kinase family. Post-translationally, C-terminal tyrosine kinase domain is capable of autophosphorylation, in vitro. ZakA and zak2 are coexpressed in prestalk cell population, zakA is enriched in pstB populations and zak1 in pstA populations. ZakA and zak2 are coexpressed in prespore cells, zakA expression levels are 10 fold higher than zak2.

It carries out the reaction L-seryl-[protein] + ATP = O-phospho-L-seryl-[protein] + ADP + H(+). It catalyses the reaction L-threonyl-[protein] + ATP = O-phospho-L-threonyl-[protein] + ADP + H(+). The enzyme catalyses L-tyrosyl-[protein] + ATP = O-phospho-L-tyrosyl-[protein] + ADP + H(+). Its function is as follows. Positive regulator of gsk3/gskA activity required for cell pattern formation and a downstream effector of carC. The kinases, gsk3/gskA, zakA and zak2, form part of a signaling pathway that responds to extracellular cyclic AMP. The pathway has a role in transcriptional regulation; required to direct prespore/spore fates during development. Zak2 negatively regulates prestalk differentiation by regulating expression of ecmA. Phosphorylates Y-214 of gsk3/gskA, in vitro. This is Dual specificity protein kinase zak2 (zak2) from Dictyostelium discoideum (Social amoeba).